The following is a 228-amino-acid chain: 30 kDa heat shock protein (228 aa).

Disordered regions lie at residues 34–53 (EVQG…PTRT), 117–136 (KGEP…DVDE), and 144–174 (TATG…APAE). Residues 49-228 (QPTRTFSPKF…KHETIRIAIN (180 aa)) form the sHSP domain. Residues 144-158 (TATGANNQNNQQVAQ) are compositionally biased toward low complexity.

This sequence belongs to the small heat shock protein (HSP20) family.

It localises to the cytoplasm. The protein is 30 kDa heat shock protein (hsp30) of Neurospora crassa (strain ATCC 24698 / 74-OR23-1A / CBS 708.71 / DSM 1257 / FGSC 987).